Here is a 98-residue protein sequence, read N- to C-terminus: C-X-C motif chemokine 10 (98 aa).

The signal sequence occupies residues 1 to 21 (MNQTAILICCLVFLTLSGIQG). Citrulline is present on R26. Disulfide bonds link C30–C57 and C32–C74.

It belongs to the intercrine alpha (chemokine CxC) family.

It is found in the secreted. Its function is as follows. Chemotactic for monocytes and T-lymphocytes. Binds to CXCR3. This chain is C-X-C motif chemokine 10 (CXCL10), found in Macaca nemestrina (Pig-tailed macaque).